Consider the following 166-residue polypeptide: Ribosome maturation factor RimM (166 aa).

Residues 94–166 (EGEYYLGKLI…IELKVLDLLK (73 aa)) enclose the PRC barrel domain.

This sequence belongs to the RimM family. In terms of assembly, binds ribosomal protein uS19.

It is found in the cytoplasm. In terms of biological role, an accessory protein needed during the final step in the assembly of 30S ribosomal subunit, possibly for assembly of the head region. Essential for efficient processing of 16S rRNA. May be needed both before and after RbfA during the maturation of 16S rRNA. It has affinity for free ribosomal 30S subunits but not for 70S ribosomes. This is Ribosome maturation factor RimM from Borreliella burgdorferi (strain ATCC 35210 / DSM 4680 / CIP 102532 / B31) (Borrelia burgdorferi).